We begin with the raw amino-acid sequence, 201 residues long: FMN-dependent NADH:quinone oxidoreductase (201 aa).

Residues Ser10, 16 to 18, 96 to 99, and 140 to 143 each bind FMN; these read SQS, MYNF, and SRGG.

Belongs to the azoreductase type 1 family. Homodimer. It depends on FMN as a cofactor.

It catalyses the reaction 2 a quinone + NADH + H(+) = 2 a 1,4-benzosemiquinone + NAD(+). The catalysed reaction is N,N-dimethyl-1,4-phenylenediamine + anthranilate + 2 NAD(+) = 2-(4-dimethylaminophenyl)diazenylbenzoate + 2 NADH + 2 H(+). Functionally, quinone reductase that provides resistance to thiol-specific stress caused by electrophilic quinones. In terms of biological role, also exhibits azoreductase activity. Catalyzes the reductive cleavage of the azo bond in aromatic azo compounds to the corresponding amines. In Pectobacterium atrosepticum (strain SCRI 1043 / ATCC BAA-672) (Erwinia carotovora subsp. atroseptica), this protein is FMN-dependent NADH:quinone oxidoreductase.